The primary structure comprises 195 residues: MEINTHNAEILLSAANKSHYPQDDIPEIALAGRSNVGKSSFINTLLNRKNLARTSGKPGKTQLLNFFNIDDKLRFVDVPGYGYARVSKKEREKWGRMIEEYLTSRENLRAVVSLVDLRHDPSADDVQMYEFLKYYDIPVILVATKADKIPRGKWNKHESAIKKKLDFDKNDDFILFSSVTKDGLDAAWDAILSKI.

An EngB-type G domain is found at 24–195; sequence DIPEIALAGR…AAWDAILSKI (172 aa). GTP is bound by residues 32–39, 59–63, 77–80, 144–147, and 176–178; these read GRSNVGKS, GKTQL, DVPG, TKAD, and FSS. Mg(2+) is bound by residues Ser39 and Thr61.

This sequence belongs to the TRAFAC class TrmE-Era-EngA-EngB-Septin-like GTPase superfamily. EngB GTPase family. Mg(2+) serves as cofactor.

Necessary for normal cell division and for the maintenance of normal septation. This Streptococcus sanguinis (strain SK36) protein is Probable GTP-binding protein EngB.